Reading from the N-terminus, the 260-residue chain is Acetylglutamate kinase (260 aa).

Substrate-binding positions include 41-42 (GG), Arg63, and Asn156.

The protein belongs to the acetylglutamate kinase family. ArgB subfamily.

The protein localises to the cytoplasm. It carries out the reaction N-acetyl-L-glutamate + ATP = N-acetyl-L-glutamyl 5-phosphate + ADP. The protein operates within amino-acid biosynthesis; L-arginine biosynthesis; N(2)-acetyl-L-ornithine from L-glutamate: step 2/4. Its function is as follows. Catalyzes the ATP-dependent phosphorylation of N-acetyl-L-glutamate. This chain is Acetylglutamate kinase, found in Halalkalibacterium halodurans (strain ATCC BAA-125 / DSM 18197 / FERM 7344 / JCM 9153 / C-125) (Bacillus halodurans).